We begin with the raw amino-acid sequence, 726 residues long: Methionine--tRNA ligase (726 aa).

Positions 12–22 (PYVNNIPHLGN) match the 'HIGH' region motif. Zn(2+)-binding residues include C143, C146, C155, and C158. The short motif at 330-334 (KFSKS) is the 'KMSKS' region element. Position 333 (K333) interacts with ATP. The region spanning 562 to 667 (FSEKVCLKVV…DNPIPGERII (106 aa)) is the tRNA-binding domain.

The protein belongs to the class-I aminoacyl-tRNA synthetase family. MetG type 1 subfamily. Homodimer. Zn(2+) is required as a cofactor.

It is found in the cytoplasm. The catalysed reaction is tRNA(Met) + L-methionine + ATP = L-methionyl-tRNA(Met) + AMP + diphosphate. Is required not only for elongation of protein synthesis but also for the initiation of all mRNA translation through initiator tRNA(fMet) aminoacylation. The polypeptide is Methionine--tRNA ligase (Borrelia turicatae (strain 91E135)).